Here is a 280-residue protein sequence, read N- to C-terminus: MVFSVATSSVTNPKLHHHHHLSDFNRNRVSTSLKIMNSKNHTNPRKCECFDLYDQLIPYKKAWSWQKSILNEKKALIDKNQECSDSLIILQHPSVYTMGTGSSENYLNFDIKNAPFDVYRTERGGEVTYHGPGQLVMYPIINLRNHKMDLHWYLRKLEEVVIRVLSSAFAINASRLDGFTGVWVGNKKMAAIGIRVSKWMTYHGLALNVTTDLTPFNSIVPCGIRNRGVGSVKGLIEDGEHYNKLEDLQLLDIAHESLLKEFSEVFQLQMEKQTVFKLEC.

The transit peptide at 1–34 directs the protein to the chloroplast; sequence MVFSVATSSVTNPKLHHHHHLSDFNRNRVSTSLK. A BPL/LPL catalytic domain is found at 81-270; it reads QECSDSLIIL…EFSEVFQLQM (190 aa). Residues 123-130, 191-193, and 204-206 contribute to the substrate site; these read RGGEVTYH, AIG, and GLA. Cysteine 222 functions as the Acyl-thioester intermediate in the catalytic mechanism.

This sequence belongs to the LipB family. Expressed in roots, leaves, cauline leaves, stems, siliques and flowers.

It is found in the plastid. It localises to the chloroplast. The enzyme catalyses octanoyl-[ACP] + L-lysyl-[protein] = N(6)-octanoyl-L-lysyl-[protein] + holo-[ACP] + H(+). Its pathway is protein modification; protein lipoylation via endogenous pathway; protein N(6)-(lipoyl)lysine from octanoyl-[acyl-carrier-protein]: step 1/2. Functionally, catalyzes the transfer of endogenously produced octanoic acid from octanoyl-acyl-carrier-protein onto the lipoyl domains of lipoate-dependent enzymes. Lipoyl-ACP can also act as a substrate although octanoyl-ACP is likely to be the physiological substrate. Together with LIP1P is essential for de novo plastidial protein lipoylation during seed development. Acts redundantly with LIP2P. The polypeptide is Octanoyltransferase LIP2p2, chloroplastic (Arabidopsis thaliana (Mouse-ear cress)).